A 156-amino-acid polypeptide reads, in one-letter code: Small ribosomal subunit protein uS15 (156 aa).

The disordered stretch occupies residues 1 to 67 (MARMHTRRRG…GVQGTPIPDV (67 aa)). Residues 10 to 19 (GSSDSDKPAA) show a composition bias toward basic and acidic residues. A compositionally biased stretch (acidic residues) spans 21–32 (EPPEWSDVDEDA).

This sequence belongs to the universal ribosomal protein uS15 family. In terms of assembly, part of the 30S ribosomal subunit.

In Haloarcula marismortui (strain ATCC 43049 / DSM 3752 / JCM 8966 / VKM B-1809) (Halobacterium marismortui), this protein is Small ribosomal subunit protein uS15.